The following is a 473-amino-acid chain: Sulfhydrylase-like protein lolC1 (473 aa).

Lys-226 bears the N6-(pyridoxal phosphate)lysine mark.

Belongs to the trans-sulfuration enzymes family. Pyridoxal 5'-phosphate is required as a cofactor.

Its pathway is alkaloid biosynthesis. In terms of biological role, sulfhydrylase-like protein; part of the gene cluster that mediates the biosynthesis of loline alkaloids, potent insecticidal agents composed of a pyrrolizidine ring system and an uncommon ether bridge linking carbons 2 and 7. Lolines are structurally differentiated by the various modifications of the L-amino group and include norloline, loline, N-methylloline, N-acetylloline, N-acetylnorloline, and N-formylloline. The first committed step is the condensation of O-acetyl-L-homoserine (derived from L-aspartic acid) and L-proline, probably catalyzed by the gamma-type pyridoxal 5'-phosphate(PLP)-dependent enzyme lolC, to give the diamino diacid, NACPP. Ensuing cyclization, decarboxylation, and acetylation steps yield 1-exo-acetamidopyrrolizidine (AcAP). LolO is required for installation of the ether bridge upon the pathway intermediate, 1-exo-acetamidopyrrolizidine (AcAP). In sequential 2-oxoglutarate- and O(2)-consuming steps, lolO removes hydrogens from C2 and C7 of AcAP to form both carbon-oxygen bonds in N-acetylnorloline (NANL), the precursor to all other lolines. The enzymes lolD, lolE, lolF and lolT have also been proposed to be involved in the ether-bridge installation. Further processing of the exocyclic moiety of NANL by fungal N-acetamidase (LolN), methyltransferase (LolM), and cytochrome P450 (LolP) enzymes, with occasional involvement of a plant acetyltransferase, generates the other known lolines. LolN transforms NANL to norlonine which is monomethylated and dimethylated to respectively lonine and N-methyllonine (NML) by lolM. LolP catalyzes hydroxylation of the methyl group in N-methylloline (NML) and further oxygenation to N-formylloline (NFL). A plant acetyltransferase is responsible for the acetylation of loline to form N-acetylloline (NAL). LolA might interact with aspartate kinase to prevent feedback inhibition of its activity by these end products and thereby promote production of L-homoserine from L-aspartate. The sequence is that of Sulfhydrylase-like protein lolC1 from Epichloe uncinata (Endophyte fungus).